Here is a 114-residue protein sequence, read N- to C-terminus: Nucleoid-associated protein MAE_23910 (114 aa).

This sequence belongs to the YbaB/EbfC family. Homodimer.

The protein localises to the cytoplasm. It localises to the nucleoid. Functionally, binds to DNA and alters its conformation. May be involved in regulation of gene expression, nucleoid organization and DNA protection. This is Nucleoid-associated protein MAE_23910 from Microcystis aeruginosa (strain NIES-843 / IAM M-2473).